Here is a 367-residue protein sequence, read N- to C-terminus: Anthranilate phosphoribosyltransferase (367 aa).

A compositionally biased stretch (low complexity) spans 1-21 (MALSSESSAASAARRPSGGPA). Residues 1–24 (MALSSESSAASAARRPSGGPATSW) are disordered. 5-phospho-alpha-D-ribose 1-diphosphate contacts are provided by residues G104, 107 to 108 (GD), T112, 114 to 117 (NLST), 132 to 140 (KHGNRAASS), and G144. Residue G104 coordinates anthranilate. A Mg(2+)-binding site is contributed by S116. N135 lines the anthranilate pocket. R190 is a binding site for anthranilate. Mg(2+) contacts are provided by D248 and E249.

The protein belongs to the anthranilate phosphoribosyltransferase family. Homodimer. Mg(2+) is required as a cofactor.

It catalyses the reaction N-(5-phospho-beta-D-ribosyl)anthranilate + diphosphate = 5-phospho-alpha-D-ribose 1-diphosphate + anthranilate. It functions in the pathway amino-acid biosynthesis; L-tryptophan biosynthesis; L-tryptophan from chorismate: step 2/5. Its function is as follows. Catalyzes the transfer of the phosphoribosyl group of 5-phosphorylribose-1-pyrophosphate (PRPP) to anthranilate to yield N-(5'-phosphoribosyl)-anthranilate (PRA). The chain is Anthranilate phosphoribosyltransferase from Mycolicibacterium paratuberculosis (strain ATCC BAA-968 / K-10) (Mycobacterium paratuberculosis).